We begin with the raw amino-acid sequence, 87 residues long: HssA/B-like protein 55 (87 aa).

Polar residues predominate over residues 1–13 (MTILSAITSISRP). The interval 1–31 (MTILSAITSISRPNKSSKSVVSSNGGSSLSM) is disordered. Residues 14–31 (NKSSKSVVSSNGGSSLSM) show a composition bias toward low complexity.

This sequence belongs to the hssA/B family.

This chain is HssA/B-like protein 55 (hssl55), found in Dictyostelium discoideum (Social amoeba).